The sequence spans 337 residues: 4-hydroxythreonine-4-phosphate dehydrogenase (337 aa).

Substrate-binding residues include H139 and T140. Residues H173, H218, and H273 each coordinate a divalent metal cation. K281, N290, and R299 together coordinate substrate.

This sequence belongs to the PdxA family. In terms of assembly, homodimer. It depends on Zn(2+) as a cofactor. The cofactor is Mg(2+). Co(2+) serves as cofactor.

The protein resides in the cytoplasm. It carries out the reaction 4-(phosphooxy)-L-threonine + NAD(+) = 3-amino-2-oxopropyl phosphate + CO2 + NADH. It functions in the pathway cofactor biosynthesis; pyridoxine 5'-phosphate biosynthesis; pyridoxine 5'-phosphate from D-erythrose 4-phosphate: step 4/5. In terms of biological role, catalyzes the NAD(P)-dependent oxidation of 4-(phosphooxy)-L-threonine (HTP) into 2-amino-3-oxo-4-(phosphooxy)butyric acid which spontaneously decarboxylates to form 3-amino-2-oxopropyl phosphate (AHAP). The polypeptide is 4-hydroxythreonine-4-phosphate dehydrogenase (Rhodopseudomonas palustris (strain ATCC BAA-98 / CGA009)).